A 531-amino-acid chain; its full sequence is Putative heme-binding protein HQ_1094A (531 aa).

H177 is a heme binding site. The disordered stretch occupies residues 269–340 (AHGEAHGHAH…STNTNTQDSE (72 aa)). A compositionally biased stretch (basic and acidic residues) spans 271 to 281 (GEAHGHAHGDS). The span at 284–306 (GSGGGGGSSHGQSPGGASAGGSA) shows a compositional bias: gly residues. Basic and acidic residues predominate over residues 308–317 (GTEDADHSDS). The segment covering 318–338 (RSTTSADTTQSDTSTNTNTQD) has biased composition (low complexity). The ABM domain maps to 441 to 529 (GTMGMFYTVK…VLSERPRHVF (89 aa)).

It in the N-terminal section; belongs to the ChdC family.

The protein is Putative heme-binding protein HQ_1094A of Haloquadratum walsbyi (strain DSM 16790 / HBSQ001).